The sequence spans 119 residues: Large ribosomal subunit protein bL20 (119 aa).

The protein belongs to the bacterial ribosomal protein bL20 family.

In terms of biological role, binds directly to 23S ribosomal RNA and is necessary for the in vitro assembly process of the 50S ribosomal subunit. It is not involved in the protein synthesizing functions of that subunit. This Clostridium acetobutylicum (strain ATCC 824 / DSM 792 / JCM 1419 / IAM 19013 / LMG 5710 / NBRC 13948 / NRRL B-527 / VKM B-1787 / 2291 / W) protein is Large ribosomal subunit protein bL20.